The chain runs to 465 residues: Ras-like GTPase YcjX (465 aa).

Residues 26–33 (GLSRSGKT) carry the Walker A motif motif. Serine 28, glycine 31, lysine 32, threonine 33, alanine 34, tryptophan 95, threonine 99, and arginine 100 together coordinate GTP. The GDP site is built by glycine 31, lysine 32, threonine 33, alanine 34, tryptophan 95, and threonine 99. An N6-acetyllysine modification is found at lysine 249. Lysine 338, aspartate 340, histidine 341, and valine 380 together coordinate GTP. 4 residues coordinate GDP: lysine 338, aspartate 340, histidine 341, and valine 380.

This sequence to H.influenzae HI_1637. Monomer in solution. Requires Mg(2+) as cofactor.

It carries out the reaction GTP + H2O = GDP + phosphate + H(+). Alternates between an inactive form bound to GDP and an active form bound to GTP. Likely activated by a guanine nucleotide-exchange factor (GEF). In terms of biological role, binds GTP and GDP. Has intrinsic GTPase activity. Does not hydrolyze ATP. May act as a transducer of stress responses. The protein is Ras-like GTPase YcjX (ycjX) of Escherichia coli (strain K12).